Reading from the N-terminus, the 661-residue chain is Ubiquitin carboxyl-terminal hydrolase 51 (661 aa).

The tract at residues 1–144 is disordered; the sequence is MRGTQGAQEM…SENSLLEVGS (144 aa). The segment covering 21–30 has biased composition (polar residues); it reads TSENLTSRGS. Residues 53 to 71 are compositionally biased toward basic residues; it reads PRRKPRPRPQPRSRSRGGR. Positions 75–96 are enriched in pro residues; sequence APPPPPAKPPPPPPAPPPPPLP. The UBP-type zinc-finger motif lies at 149 to 267; the sequence is TGCCHVESFK…KETKEKILGL (119 aa). Residues Cys151, His153, Cys192, Cys195, Cys205, Cys208, Cys213, His218, His222, His228, Cys241, and Cys244 each contribute to the Zn(2+) site. Residues 320–656 form the USP domain; sequence RGLINLGNTC…EGYLLFYHRQ (337 aa). Catalysis depends on Cys329, which acts as the Nucleophile. The active-site Proton acceptor is the His615.

The protein belongs to the peptidase C19 family. Interacts with H2A.

The protein resides in the chromosome. It catalyses the reaction Thiol-dependent hydrolysis of ester, thioester, amide, peptide and isopeptide bonds formed by the C-terminal Gly of ubiquitin (a 76-residue protein attached to proteins as an intracellular targeting signal).. Specifically deubiquitinates 'Lys-14' (H2AK13Ub) and 'Lys-16'(H2AK15Ub) of histone H2A regulating the DNA damage response at double-strand breaks (DSBs). USP51 is recruited to chromatin after DNA damage and regulates the dynamic assembly/disassembly of TP53BP1 and BRCA1. Functions in DNA double-strand break repair also by mediating the deubiquitination and subsequent stabilization of DGCR8, leading to the recruitment of DGCR8 binding partners to double strand breaks such as RNF168 or MDC1. In addition, promotes the deubiquitination and stabilization of the transcriptional repressor ZEB1. The polypeptide is Ubiquitin carboxyl-terminal hydrolase 51 (Mus musculus (Mouse)).